A 136-amino-acid chain; its full sequence is Transmembrane protein 203 (136 aa).

An interaction with STING1 region spans residues 1-51 (MLFSLRELVQWLGFATFEIFVHLLALLVFSVLLALRVDGLVPGLSWWNVFV). 4 helical membrane passes run 14–34 (FATF…VLLA), 50–72 (FVPF…VRLF), 81–101 (VLRL…EMLL), and 112–132 (LWFG…MIRA). Positions 52 to 136 (PFFAADGLST…LLMIRACRVN (85 aa)) are required for the lysosomal localization of the STING-TMEM203 complex.

As to quaternary structure, homodimer. Interacts with ATP2A2, ITPR3 and STIM1. Interacts with STING1 (via transmembrane domain). As to expression, increased expression seen in T-lymphocytes from patients with systemic lupus erythematosus (SLE).

Its subcellular location is the endoplasmic reticulum membrane. It localises to the endoplasmic reticulum-Golgi intermediate compartment. It is found in the lysosome membrane. Involved in the regulation of cellular calcium homeotasis. Required for spermatogenesis. Acts as a regulator of STING-mediated inflammatory signaling in macrophages. Forms a complex with STING, promoting the activity of TBK1 kinase and the transcription factor IRF3, leading to activation of type I interferon expression. The protein is Transmembrane protein 203 (TMEM203) of Homo sapiens (Human).